The primary structure comprises 487 residues: UDP-glycosyltransferase 85A7 (487 aa).

UDP-alpha-D-glucose-binding positions include 364-366 (CPQ), 381-389 (HCGWNSTLE), and 403-406 (FSEQ).

This sequence belongs to the UDP-glycosyltransferase family. In terms of tissue distribution, expressed in roots, shoots, leaves and flowers.

In Arabidopsis thaliana (Mouse-ear cress), this protein is UDP-glycosyltransferase 85A7 (UGT85A7).